The primary structure comprises 295 residues: Small ribosomal subunit protein uS2B (295 aa).

S2 bears the N-acetylserine mark. Residues 54–113 (TWEKLLLAARAIVAIENPADVSVISSRNTGQRAVLKFAAATGATPIAGRFTPGTFTNQIQ) form an interaction with PPP1R16B region. Laminin-binding regions lie at residues 161 to 180 (IPCN…MLAR) and 205 to 229 (RDPE…EFQG). The segment covering 218–227 (AEKAVTKEEF) has biased composition (basic and acidic residues). A disordered region spans residues 218–242 (AEKAVTKEEFQGEWTAPSPEFTATQ). 5 [DE]-W-[ST] repeats span residues 230-232 (EWT), 247-249 (DWS), 266-268 (DWS), 275-277 (DWS), and 293-295 (DWS). The interval 242–295 (QPEVADWSEGVQVPSVPIQQFPTEDWSAQPATEDWSAAPTAQATEWVGATTDWS) is laminin-binding. The segment at 266–295 (DWSAQPATEDWSAAPTAQATEWVGATTDWS) is disordered.

It belongs to the universal ribosomal protein uS2 family. Monomer (37LRP) and homodimer (67LR). Component of the small ribosomal subunit. Mature ribosomes consist of a small (40S) and a large (60S) subunit. The 40S subunit contains about 33 different proteins and 1 molecule of RNA (18S). The 60S subunit contains about 49 different proteins and 3 molecules of RNA (28S, 5.8S and 5S). Interacts with RPS21. Interacts with several laminins including at least LAMB1. Interacts with MDK. The mature dimeric form interacts with PPP1R16B (via its fourth ankyrin repeat). Interacts with PPP1CA only in the presence of PPP1R16B. Post-translationally, acylated. Acylation may be a prerequisite for conversion of the monomeric 37 kDa laminin receptor precursor (37LRP) to the mature dimeric 67 kDa laminin receptor (67LR), and may provide a mechanism for membrane association. In terms of processing, cleaved by stromelysin-3 (ST3) at the cell surface. Cleavage by stromelysin-3 may be a mechanism to alter cell-extracellular matrix interactions.

It localises to the cell membrane. Its subcellular location is the cytoplasm. It is found in the nucleus. Functionally, required for the assembly and/or stability of the 40S ribosomal subunit. Required for the processing of the 20S rRNA-precursor to mature 18S rRNA in a late step of the maturation of 40S ribosomal subunits. Also functions as a cell surface receptor for laminin. Plays a role in cell adhesion to the basement membrane and in the consequent activation of signaling transduction pathways. May play a role in cell fate determination and tissue morphogenesis. Also acts as a receptor for several other ligands, including the pathogenic prion protein, viruses, and bacteria. Acts as a PPP1R16B-dependent substrate of PPP1CA. The polypeptide is Small ribosomal subunit protein uS2B (Homo sapiens (Human)).